The following is a 333-amino-acid chain: Putative pectinesterase 14 (333 aa).

The signal sequence occupies residues 1-16 (MLFFILFLSIISPIES). N-linked (GlcNAc...) asparagine glycans are attached at residues asparagine 108 and asparagine 114. Threonine 116 contacts substrate. The N-linked (GlcNAc...) asparagine glycan is linked to asparagine 133. Glutamine 151 lines the substrate pocket. Aspartate 174 serves as the catalytic Proton donor. The Nucleophile role is filled by aspartate 195. Arginine 253 lines the substrate pocket. Residues asparagine 302 and asparagine 323 are each glycosylated (N-linked (GlcNAc...) asparagine).

This sequence belongs to the pectinesterase family. Expressed in flower buds.

The protein resides in the secreted. It is found in the cell wall. It catalyses the reaction [(1-&gt;4)-alpha-D-galacturonosyl methyl ester](n) + n H2O = [(1-&gt;4)-alpha-D-galacturonosyl](n) + n methanol + n H(+). It functions in the pathway glycan metabolism; pectin degradation; 2-dehydro-3-deoxy-D-gluconate from pectin: step 1/5. Its function is as follows. Acts in the modification of cell walls via demethylesterification of cell wall pectin. In Arabidopsis thaliana (Mouse-ear cress), this protein is Putative pectinesterase 14 (PME14).